Consider the following 470-residue polypeptide: Chitin deacetylase 1 (470 aa).

Residues 1–19 (MFTFAAFSALLISLAGVVA) form the signal peptide. N-linked (GlcNAc...) asparagine glycans are attached at residues asparagine 101 and asparagine 121. A disulfide bond links cysteine 155 and cysteine 363. Residues 159-358 (NVWGLSYDDG…VLANGTYQLK (200 aa)) enclose the NodB homology domain. Aspartate 166 serves as the catalytic Proton acceptor. Aspartate 166 is an acetate binding site. Co(2+) is bound by residues aspartate 167, histidine 216, and histidine 220. Tyrosine 257 contributes to the acetate binding site. Catalysis depends on histidine 331, which acts as the Proton donor. N-linked (GlcNAc...) asparagine glycans are attached at residues asparagine 352, asparagine 378, and asparagine 440. Residues 406-447 (EVSAPSEATGSTAAGSAASTTSGSGASASTGAASNTSSSGSG) are disordered. Over residues 408–447 (SAPSEATGSTAAGSAASTTSGSGASASTGAASNTSSSGSG) the composition is skewed to low complexity. A lipid anchor (GPI-anchor amidated serine) is attached at serine 444. Positions 445–470 (GSGRSATMGGALIALAAVAVGMVYVA) are cleaved as a propeptide — removed in mature form.

Belongs to the polysaccharide deacetylase family. Co(2+) serves as cofactor.

It localises to the secreted. The protein localises to the cell wall. It is found in the cell membrane. The catalysed reaction is [(1-&gt;4)-N-acetyl-beta-D-glucosaminyl](n) + n H2O = chitosan + n acetate. Hydrolyzes the N-acetamido groups of N-acetyl-D-glucosamine residues in chitin to form chitosan and acetate. Chitosan is required to anchor melanin to the cell wall, for maintenance of cell wall integrity, and for proper cytokinesis. Plays a major role in synthesizing cell wall chitosan during host infection; chitosan offers an advantage during infection as it is less readily detected than chitin by host immunosurveillance mechanisms. In Cryptococcus neoformans var. grubii serotype A (strain H99 / ATCC 208821 / CBS 10515 / FGSC 9487) (Filobasidiella neoformans var. grubii), this protein is Chitin deacetylase 1.